The primary structure comprises 324 residues: uncharacterized protein (324 aa).

Belongs to the mgp1/MG371 family.

This is an uncharacterized protein from Mycoplasma genitalium (strain ATCC 33530 / DSM 19775 / NCTC 10195 / G37) (Mycoplasmoides genitalium).